The primary structure comprises 853 residues: DNA mismatch repair protein MutS (853 aa).

614–621 serves as a coordination point for ATP; that stretch reads GPNMGGKS.

It belongs to the DNA mismatch repair MutS family.

This protein is involved in the repair of mismatches in DNA. It is possible that it carries out the mismatch recognition step. This protein has a weak ATPase activity. The sequence is that of DNA mismatch repair protein MutS from Escherichia coli O1:K1 / APEC.